Consider the following 431-residue polypeptide: Glutamate-1-semialdehyde 2,1-aminomutase 2 (431 aa).

Lys-268 carries the N6-(pyridoxal phosphate)lysine modification.

Belongs to the class-III pyridoxal-phosphate-dependent aminotransferase family. HemL subfamily. As to quaternary structure, homodimer. Requires pyridoxal 5'-phosphate as cofactor.

The protein resides in the cytoplasm. It catalyses the reaction (S)-4-amino-5-oxopentanoate = 5-aminolevulinate. The protein operates within porphyrin-containing compound metabolism; protoporphyrin-IX biosynthesis; 5-aminolevulinate from L-glutamyl-tRNA(Glu): step 2/2. The chain is Glutamate-1-semialdehyde 2,1-aminomutase 2 from Bacillus licheniformis (strain ATCC 14580 / DSM 13 / JCM 2505 / CCUG 7422 / NBRC 12200 / NCIMB 9375 / NCTC 10341 / NRRL NRS-1264 / Gibson 46).